A 459-amino-acid chain; its full sequence is Sulfide:quinone oxidoreductase, mitochondrial (459 aa).

A mitochondrion-targeting transit peptide spans 1 to 24 (MLTLNSTIKSVTGSFQSASMLARF). 35–39 (GGGSA) lines the FAD pocket. Residues cysteine 204 and cysteine 383 each act as cysteine persulfide intermediate in the active site.

Belongs to the SQRD family. FAD is required as a cofactor.

Its subcellular location is the mitochondrion. Its function is as follows. Catalyzes the oxidation of hydrogen sulfide, with the help of a quinone. The chain is Sulfide:quinone oxidoreductase, mitochondrial (hmt2) from Schizosaccharomyces pombe (strain 972 / ATCC 24843) (Fission yeast).